Consider the following 371-residue polypeptide: 3-dehydroquinate synthase (371 aa).

NAD(+) contacts are provided by residues 70 to 75, 104 to 108, 128 to 129, K141, and K150; these read DAEDGK, GAVTD, and TT. E183, H246, and H262 together coordinate Zn(2+).

Belongs to the sugar phosphate cyclases superfamily. Dehydroquinate synthase family. Co(2+) is required as a cofactor. Requires Zn(2+) as cofactor. It depends on NAD(+) as a cofactor.

The protein localises to the cytoplasm. It carries out the reaction 7-phospho-2-dehydro-3-deoxy-D-arabino-heptonate = 3-dehydroquinate + phosphate. It functions in the pathway metabolic intermediate biosynthesis; chorismate biosynthesis; chorismate from D-erythrose 4-phosphate and phosphoenolpyruvate: step 2/7. In terms of biological role, catalyzes the conversion of 3-deoxy-D-arabino-heptulosonate 7-phosphate (DAHP) to dehydroquinate (DHQ). In Saccharopolyspora erythraea (strain ATCC 11635 / DSM 40517 / JCM 4748 / NBRC 13426 / NCIMB 8594 / NRRL 2338), this protein is 3-dehydroquinate synthase.